Reading from the N-terminus, the 233-residue chain is Large ribosomal subunit protein uL1 (233 aa).

It belongs to the universal ribosomal protein uL1 family. In terms of assembly, part of the 50S ribosomal subunit.

Its function is as follows. Binds directly to 23S rRNA. The L1 stalk is quite mobile in the ribosome, and is involved in E site tRNA release. Functionally, protein L1 is also a translational repressor protein, it controls the translation of the L11 operon by binding to its mRNA. This is Large ribosomal subunit protein uL1 from Rhizobium johnstonii (strain DSM 114642 / LMG 32736 / 3841) (Rhizobium leguminosarum bv. viciae).